Here is a 662-residue protein sequence, read N- to C-terminus: DNA ligase (662 aa).

NAD(+) is bound by residues 32-36 (DAEYD), 75-76 (SL), and E106. K108 acts as the N6-AMP-lysine intermediate in catalysis. The NAD(+) site is built by R129, E164, K271, and K295. Positions 389, 392, 407, and 413 each coordinate Zn(2+). Positions 580–662 (SSNSVLNNKI…HKVISLGVFK (83 aa)) constitute a BRCT domain.

The protein belongs to the NAD-dependent DNA ligase family. LigA subfamily. The cofactor is Mg(2+). Requires Mn(2+) as cofactor.

The enzyme catalyses NAD(+) + (deoxyribonucleotide)n-3'-hydroxyl + 5'-phospho-(deoxyribonucleotide)m = (deoxyribonucleotide)n+m + AMP + beta-nicotinamide D-nucleotide.. In terms of biological role, DNA ligase that catalyzes the formation of phosphodiester linkages between 5'-phosphoryl and 3'-hydroxyl groups in double-stranded DNA using NAD as a coenzyme and as the energy source for the reaction. It is essential for DNA replication and repair of damaged DNA. This Wolbachia pipientis wMel protein is DNA ligase.